A 130-amino-acid chain; its full sequence is Small ribosomal subunit protein uS8 (130 aa).

This sequence belongs to the universal ribosomal protein uS8 family. As to quaternary structure, part of the 30S ribosomal subunit. Contacts proteins S5 and S12.

Functionally, one of the primary rRNA binding proteins, it binds directly to 16S rRNA central domain where it helps coordinate assembly of the platform of the 30S subunit. This is Small ribosomal subunit protein uS8 from Alteromonas mediterranea (strain DSM 17117 / CIP 110805 / LMG 28347 / Deep ecotype).